Here is a 388-residue protein sequence, read N- to C-terminus: Pepsin A (388 aa).

A signal peptide spans 1 to 15 (MKWLLLLGLVALSEC). The propeptide at 16 to 62 (IIYKVPLVRKKSLRRNLSEHGLLKDFLKKHNRNPASKYFPQTEAPTL) is activation peptide. A Peptidase A1 domain is found at 76 to 385 (YFGTIGIGTP…DRANNQVGLA (310 aa)). Aspartate 94 is a catalytic residue. Cysteine 107 and cysteine 112 are oxidised to a cystine. A Phosphoserine modification is found at serine 130. Cysteine 268 and cysteine 272 are oxidised to a cystine. Aspartate 277 is an active-site residue. Residues cysteine 311 and cysteine 344 are joined by a disulfide bond.

This sequence belongs to the peptidase A1 family.

Its subcellular location is the secreted. The catalysed reaction is Preferential cleavage: hydrophobic, preferably aromatic, residues in P1 and P1' positions. Cleaves 1-Phe-|-Val-2, 4-Gln-|-His-5, 13-Glu-|-Ala-14, 14-Ala-|-Leu-15, 15-Leu-|-Tyr-16, 16-Tyr-|-Leu-17, 23-Gly-|-Phe-24, 24-Phe-|-Phe-25 and 25-Phe-|-Tyr-26 bonds in the B chain of insulin.. Shows particularly broad specificity; although bonds involving phenylalanine and leucine are preferred, many others are also cleaved to some extent. The polypeptide is Pepsin A (PGA) (Macaca mulatta (Rhesus macaque)).